Reading from the N-terminus, the 337-residue chain is MNTQQRFALTPGEPAGIGPDLCLLLAREAQPVPLVAIASLALLAERAQQLGLAIELLEVGPEQWPDSPAAAGSLYVWDTPLAVPAHAGRLDPANAGYVLETLTRAGQGCLDGTFAAMITAPVHKGVINEAGIAFSGHTEFLAELTATEQVVMMLATRGLRVALVTTHLPLKDVAAAITAERLQRVTRILHADLQAKFGIAAPRILVCGLNPHAGEGGHLGREEIEIIEPTLERLRAEGMNLIGPLPADTLFTPKHLEHADAVLAMYHDQGLPVLKFKGFGAALNVTLGLPIIRTSVDHGTALDLAGSGNIDTGSLQVALETAYQMAAATSGKSQAAG.

The substrate site is built by histidine 137 and threonine 138. A divalent metal cation is bound by residues histidine 167, histidine 212, and histidine 267. Lysine 275, asparagine 284, and arginine 293 together coordinate substrate.

This sequence belongs to the PdxA family. As to quaternary structure, homodimer. Zn(2+) is required as a cofactor. The cofactor is Mg(2+). It depends on Co(2+) as a cofactor.

Its subcellular location is the cytoplasm. The catalysed reaction is 4-(phosphooxy)-L-threonine + NAD(+) = 3-amino-2-oxopropyl phosphate + CO2 + NADH. Its pathway is cofactor biosynthesis; pyridoxine 5'-phosphate biosynthesis; pyridoxine 5'-phosphate from D-erythrose 4-phosphate: step 4/5. In terms of biological role, catalyzes the NAD(P)-dependent oxidation of 4-(phosphooxy)-L-threonine (HTP) into 2-amino-3-oxo-4-(phosphooxy)butyric acid which spontaneously decarboxylates to form 3-amino-2-oxopropyl phosphate (AHAP). This is 4-hydroxythreonine-4-phosphate dehydrogenase from Ectopseudomonas mendocina (strain ymp) (Pseudomonas mendocina).